The chain runs to 223 residues: Transmembrane protein 235 (223 aa).

The N-terminal stretch at 1–28 (MARLGALLLAAALGALLSFALLAAAVAS) is a signal peptide. Residue Asn41 is glycosylated (N-linked (GlcNAc...) asparagine). The next 3 helical transmembrane spans lie at 96–116 (VIVV…CGLL), 126–146 (LLFT…GVSI), and 176–196 (WSMA…TLLL).

It belongs to the PMP-22/EMP/MP20 family. Post-translationally, N-glycosylated.

It is found in the membrane. Its subcellular location is the endoplasmic reticulum. The sequence is that of Transmembrane protein 235 (TMEM235) from Homo sapiens (Human).